The sequence spans 598 residues: uncharacterized protein (598 aa).

Low complexity predominate over residues 1 to 19; it reads MSVPLRFSTPSSSPSASDN. Disordered regions lie at residues 1 to 54, 139 to 176, and 194 to 279; these read MSVP…MRPK, QKNQ…PNWK, and EAQL…ITMP. Residues 1–313 are Cytoplasmic-facing; the sequence is MSVPLRFSTP…CKIRHFFREG (313 aa). The segment covering 30 to 48 has biased composition (polar residues); the sequence is ELDTFNTTDVPRRVNTTKA. Positions 147–165 are enriched in low complexity; it reads RANSRVNSRANSRANSSVS. 2 stretches are compositionally biased toward polar residues: residues 218-242 and 255-276; these read FSLQ…SSAI and PRNN…SQDI. The chain crosses the membrane as a helical span at residues 314 to 334; the sequence is FAEFLGTLVLVVFGVGSNLQA. Over 335–346 the chain is Extracellular; sequence TVTNGAGGSFES. The helical transmembrane segment at 347 to 367 threads the bilayer; it reads LSFAWGFGCMLGVYIAGGISG. The Cytoplasmic portion of the chain corresponds to 368–388; sequence GHVNPAVTISLAIFRKFPWYK. Residues 371 to 373 carry the NPA 1 motif; it reads NPA. The chain crosses the membrane as a helical span at residues 389–409; the sequence is VPIYIFFQIWGAFFGGALAYG. Residues 410-444 are Extracellular-facing; the sequence is YHWSSITEFEGGKDIRTPATGGCLYTNPKPYVTWR. A helical transmembrane segment spans residues 445–465; it reads NAFFDEFIGTAVLVGCLFAIL. At 466–473 the chain is on the cytoplasmic side; sequence DDTNSPPT. The chain crosses the membrane as a helical span at residues 474 to 494; sequence QGMTAFIVGLLIAAIGMALGY. Residues 495–532 are Extracellular-facing; that stretch reads QTSFTLNPARDLGPRMFAWWIGYGPHSFHLYHWWWTWG. Positions 501–503 match the NPA 2 motif; sequence NPA. Residues 533–553 traverse the membrane as a helical segment; the sequence is AWGGTIGGGIAGGLIYDLVIF. The Cytoplasmic portion of the chain corresponds to 554–598; the sequence is TGPESPLNYPDNGFIDKKVHQITAKFEKEEEVENLEKTDSPIENN.

It belongs to the MIP/aquaporin (TC 1.A.8) family.

The protein localises to the membrane. This is an uncharacterized protein from Schizosaccharomyces pombe (strain 972 / ATCC 24843) (Fission yeast).